Reading from the N-terminus, the 84-residue chain is Large ribosomal subunit protein uL29 (84 aa).

The protein belongs to the universal ribosomal protein uL29 family.

The chain is Large ribosomal subunit protein uL29 from Mycoplasma mobile (strain ATCC 43663 / 163K / NCTC 11711) (Mesomycoplasma mobile).